The chain runs to 71 residues: UPF0346 protein SPT_1257 (71 aa).

Belongs to the UPF0346 family.

The polypeptide is UPF0346 protein SPT_1257 (Streptococcus pneumoniae (strain Taiwan19F-14)).